A 284-amino-acid chain; its full sequence is F-box protein PP2-B13 (284 aa).

The region spanning 1–44 (MMMLPEACVANILAFTSPADAFSSSEVSSVFRLAGDSDFVWEKF) is the F-box domain.

The protein is F-box protein PP2-B13 (PP2B13) of Arabidopsis thaliana (Mouse-ear cress).